Here is a 247-residue protein sequence, read N- to C-terminus: Geranylgeranylglyceryl phosphate synthase (247 aa).

Mg(2+) contacts are provided by Asp-23 and Ser-52. Sn-glycerol 1-phosphate is bound by residues 171–177 (YLEAGSG), 203–204 (GG), and 225–226 (GT).

It belongs to the GGGP/HepGP synthase family. Group II subfamily. Mg(2+) serves as cofactor.

Its subcellular location is the cytoplasm. It catalyses the reaction sn-glycerol 1-phosphate + (2E,6E,10E)-geranylgeranyl diphosphate = sn-3-O-(geranylgeranyl)glycerol 1-phosphate + diphosphate. The protein operates within membrane lipid metabolism; glycerophospholipid metabolism. In terms of biological role, prenyltransferase that catalyzes the transfer of the geranylgeranyl moiety of geranylgeranyl diphosphate (GGPP) to the C3 hydroxyl of sn-glycerol-1-phosphate (G1P). This reaction is the first ether-bond-formation step in the biosynthesis of archaeal membrane lipids. The chain is Geranylgeranylglyceryl phosphate synthase from Methanococcoides burtonii (strain DSM 6242 / NBRC 107633 / OCM 468 / ACE-M).